The chain runs to 223 residues: Cytotoxic T-lymphocyte protein 4 (223 aa).

The signal sequence occupies residues 1-35 (MACSGFQSHGAWLELTSRTWPCTALFSLLFIPVFS). At 38-161 (MHVAQPAVVL…IDPEPCPDSD (124 aa)) the chain is on the extracellular side. The 102-residue stretch at 39-140 (HVAQPAVVLA…VELLYPPPYY (102 aa)) folds into the Ig-like V-type domain. The interval 46–50 (VLANS) is homodimerization. 2 disulfide bridges follow: Cys-58-Cys-129 and Cys-85-Cys-103. An N-linked (GlcNAc...) asparagine glycan is attached at Asn-113. The segment at 134-139 (LYPPPY) is important for interaction with CD80 and CD86. Asn-145 carries N-linked (GlcNAc...) asparagine glycosylation. Positions 150–155 (YVIDPE) are homodimerization. A helical transmembrane segment spans residues 162–182 (FLLWILAAVSSGLFFYSFLIT). At 183–223 (AVSLSKMLKKRSPLTTGVYVKMPPTEPECEKQFQPYFIPIN) the chain is on the cytoplasmic side. Phosphotyrosine; by TXK and JAK2 is present on Tyr-201.

Homodimer; disulfide-linked. Binds to CD80/B7-1 and CD86/B7.2. Interacts with ICOSLG. N-glycosylation is important for dimerization. In terms of processing, phosphorylation at Tyr-201 prevents binding to the AP-2 adapter complex, blocks endocytosis, and leads to retention of CTLA4 on the cell surface.

The protein resides in the cell membrane. Functionally, inhibitory receptor acting as a major negative regulator of T-cell responses. The affinity of CTLA4 for its natural B7 family ligands, CD80 and CD86, is considerably stronger than the affinity of their cognate stimulatory coreceptor CD28. The sequence is that of Cytotoxic T-lymphocyte protein 4 (CTLA4) from Sus scrofa (Pig).